Consider the following 119-residue polypeptide: Ribonuclease (119 aa).

Substrate is bound by residues Lys6 and Arg9. His11 acts as the Proton acceptor in catalysis. Cystine bridges form between Cys26/Cys81, Cys40/Cys92, and Cys58/Cys107. Residues 41–45 (KFTNT) and Arg82 each bind substrate. Residue His114 is the Proton donor of the active site.

This sequence belongs to the pancreatic ribonuclease family. In terms of assembly, monomer. Interacts with and forms tight 1:1 complexes with RNH1. Dimerization of two such complexes may occur. Interaction with RNH1 inhibits this protein. As to expression, pancreas.

The protein resides in the secreted. The catalysed reaction is an [RNA] containing cytidine + H2O = an [RNA]-3'-cytidine-3'-phosphate + a 5'-hydroxy-ribonucleotide-3'-[RNA].. It catalyses the reaction an [RNA] containing uridine + H2O = an [RNA]-3'-uridine-3'-phosphate + a 5'-hydroxy-ribonucleotide-3'-[RNA].. Its function is as follows. Endonuclease that catalyzes the cleavage of RNA on the 3' side of pyrimidine nucleotides. Acts on single-stranded and double-stranded RNA. The protein is Ribonuclease of Chelydra serpentina (Snapping turtle).